The sequence spans 440 residues: Zinc finger MYND domain-containing protein 10 (440 aa).

An interaction with DNAAF11 region spans residues 366–440 (QDLRLQARRW…VLAAQGDRAK (75 aa)). Zn(2+) is bound by residues Cys-394, Cys-397, Cys-405, Cys-408, Cys-414, Cys-418, His-426, and Cys-430. An MYND-type zinc finger spans residues 394–430 (CAYCSAEASKRCSRCQNEWYCCRECQVKHWEKHGKTC).

It belongs to the ZMYND10 family. In terms of assembly, interacts (via C-terminus) with DNAAF11 (via CS domain); this interaction stabilizes DNAAF11 at the protein level. Interacts (via C-terminus) with DNAL1; this interaction stabilizes DNAL1 at the protein level. Interacts with DNAAF4, HSPA8, IQUB, RUVBL2 and DYNTL5.

It is found in the cytoplasm. The protein resides in the cytoskeleton. The protein localises to the microtubule organizing center. It localises to the centrosome. Its subcellular location is the centriolar satellite. It is found in the apical cell membrane. The protein resides in the dynein axonemal particle. Functionally, plays a role in axonemal structure organization and motility. Involved in axonemal pre-assembly of inner and outer dynein arms (IDA and ODA, respectively) for proper axoneme building for cilia motility. May act by indirectly regulating transcription of dynein proteins. This Homo sapiens (Human) protein is Zinc finger MYND domain-containing protein 10.